The following is an 858-amino-acid chain: Bifunctional uridylyltransferase/uridylyl-removing enzyme (858 aa).

A uridylyltransferase region spans residues 1–324 (MSASVAAPPP…PATSGVTRVL (324 aa)). A uridylyl-removing region spans residues 325-681 (SPGRFVEKQG…ARPSPVGDAL (357 aa)). Positions 443–565 (VDQHILMVLR…VGNERRLTAL (123 aa)) constitute an HD domain. ACT domains lie at 682-761 (QVLV…PEPS) and 790-858 (ILSV…AIAV).

This sequence belongs to the GlnD family. Mg(2+) is required as a cofactor.

The catalysed reaction is [protein-PII]-L-tyrosine + UTP = [protein-PII]-uridylyl-L-tyrosine + diphosphate. It carries out the reaction [protein-PII]-uridylyl-L-tyrosine + H2O = [protein-PII]-L-tyrosine + UMP + H(+). Its activity is regulated as follows. Uridylyltransferase (UTase) activity is inhibited by glutamine, while glutamine activates uridylyl-removing (UR) activity. Its function is as follows. Modifies, by uridylylation and deuridylylation, the PII regulatory proteins (GlnB and homologs), in response to the nitrogen status of the cell that GlnD senses through the glutamine level. Under low glutamine levels, catalyzes the conversion of the PII proteins and UTP to PII-UMP and PPi, while under higher glutamine levels, GlnD hydrolyzes PII-UMP to PII and UMP (deuridylylation). Thus, controls uridylylation state and activity of the PII proteins, and plays an important role in the regulation of nitrogen assimilation and metabolism. The polypeptide is Bifunctional uridylyltransferase/uridylyl-removing enzyme (Burkholderia thailandensis (strain ATCC 700388 / DSM 13276 / CCUG 48851 / CIP 106301 / E264)).